Here is a 407-residue protein sequence, read N- to C-terminus: Transmembrane protein 184B (407 aa).

The segment at 1 to 25 is disordered; sequence MTVRGDVLAPDPASPTTAAASPSVS. The segment covering 9-25 has biased composition (low complexity); the sequence is APDPASPTTAAASPSVS. The next 7 membrane-spanning stretches (helical) occupy residues 40 to 60, 84 to 104, 121 to 141, 178 to 198, 214 to 234, 249 to 269, and 290 to 310; these read FLMT…ALLI, ILFI…FFTN, LVIY…SSIM, LQFC…QAFG, VTII…LFYF, FFMV…LAIL, and VAAG…ALAL. The segment at 369–395 is disordered; sequence TLEPGPTWRGGAHGLSRSHSLSGARDN. Serine 388, serine 402, and serine 403 each carry phosphoserine.

The protein belongs to the TMEM184 family.

Its subcellular location is the membrane. May activate the MAP kinase signaling pathway. This chain is Transmembrane protein 184B (TMEM184B), found in Homo sapiens (Human).